The sequence spans 242 residues: tRNA pseudouridine synthase A (242 aa).

Asp51 (nucleophile) is an active-site residue. Substrate is bound at residue Tyr107.

It belongs to the tRNA pseudouridine synthase TruA family. In terms of assembly, homodimer.

The catalysed reaction is uridine(38/39/40) in tRNA = pseudouridine(38/39/40) in tRNA. Functionally, formation of pseudouridine at positions 38, 39 and 40 in the anticodon stem and loop of transfer RNAs. The polypeptide is tRNA pseudouridine synthase A (Helicobacter pylori (strain J99 / ATCC 700824) (Campylobacter pylori J99)).